The primary structure comprises 148 residues: Ribonuclease pancreatic (148 aa).

Positions 1–25 (MGLEKSLLLLPLLVLVLGCVQPSLG) are cleaved as a signal peptide. Residues K32 and R35 each contribute to the substrate site. H37 (proton acceptor) is an active-site residue. Disulfide bonds link C50–C108, C64–C119, C82–C134, and C89–C96. Residues 65–69 (KPVNT) and K90 contribute to the substrate site. H143 acts as the Proton donor in catalysis.

The protein belongs to the pancreatic ribonuclease family. Monomer. Interacts with and forms tight 1:1 complexes with RNH1. Dimerization of two such complexes may occur. Interaction with RNH1 inhibits this protein. As to expression, pancreas.

It is found in the secreted. It carries out the reaction an [RNA] containing cytidine + H2O = an [RNA]-3'-cytidine-3'-phosphate + a 5'-hydroxy-ribonucleotide-3'-[RNA].. The catalysed reaction is an [RNA] containing uridine + H2O = an [RNA]-3'-uridine-3'-phosphate + a 5'-hydroxy-ribonucleotide-3'-[RNA].. Its function is as follows. Endonuclease that catalyzes the cleavage of RNA on the 3' side of pyrimidine nucleotides. Acts on single-stranded and double-stranded RNA. This is Ribonuclease pancreatic (RNASE1) from Gerbillus nigeriae (Nigerian gerbil).